The sequence spans 540 residues: Esterase B1 (540 aa).

C68 and C81 are disulfide-bonded. S191 (acyl-ester intermediate) is an active-site residue. Active-site charge relay system residues include E324 and H442. An N-linked (GlcNAc...) asparagine glycan is attached at N452.

This sequence belongs to the type-B carboxylesterase/lipase family.

The catalysed reaction is a carboxylic ester + H2O = an alcohol + a carboxylate + H(+). Overproduction of nonspecific esterases is a common mechanism of resistance to organophosphate insecticides. The sequence is that of Esterase B1 (B1) from Culex pipiens (House mosquito).